A 678-amino-acid chain; its full sequence is Methionine--tRNA ligase (678 aa).

Positions 12–22 match the 'HIGH' region motif; it reads PYANGPIHLGH. Cysteine 143, cysteine 146, cysteine 156, and cysteine 159 together coordinate Zn(2+). Positions 328-332 match the 'KMSKS' region motif; it reads KMSKS. Lysine 331 provides a ligand contact to ATP. Positions 577-678 constitute a tRNA-binding domain; sequence DFSKVDLRIA…SGAQPGMRVK (102 aa).

Belongs to the class-I aminoacyl-tRNA synthetase family. MetG type 1 subfamily. Homodimer. Zn(2+) is required as a cofactor.

Its subcellular location is the cytoplasm. The enzyme catalyses tRNA(Met) + L-methionine + ATP = L-methionyl-tRNA(Met) + AMP + diphosphate. Functionally, is required not only for elongation of protein synthesis but also for the initiation of all mRNA translation through initiator tRNA(fMet) aminoacylation. This Acidithiobacillus ferrooxidans (strain ATCC 23270 / DSM 14882 / CIP 104768 / NCIMB 8455) (Ferrobacillus ferrooxidans (strain ATCC 23270)) protein is Methionine--tRNA ligase.